The following is a 241-amino-acid chain: F-box protein At3g22350 (241 aa).

The F-box domain maps to 1–44 (MSDLPLDLVEEILSRVSATSLKRLRSTCKQWNTLFKKRSFSQKH).

The protein is F-box protein At3g22350 of Arabidopsis thaliana (Mouse-ear cress).